A 95-amino-acid polypeptide reads, in one-letter code: Aspartyl/glutamyl-tRNA(Asn/Gln) amidotransferase subunit C (95 aa).

The protein belongs to the GatC family. Heterotrimer of A, B and C subunits.

It carries out the reaction L-glutamyl-tRNA(Gln) + L-glutamine + ATP + H2O = L-glutaminyl-tRNA(Gln) + L-glutamate + ADP + phosphate + H(+). It catalyses the reaction L-aspartyl-tRNA(Asn) + L-glutamine + ATP + H2O = L-asparaginyl-tRNA(Asn) + L-glutamate + ADP + phosphate + 2 H(+). Allows the formation of correctly charged Asn-tRNA(Asn) or Gln-tRNA(Gln) through the transamidation of misacylated Asp-tRNA(Asn) or Glu-tRNA(Gln) in organisms which lack either or both of asparaginyl-tRNA or glutaminyl-tRNA synthetases. The reaction takes place in the presence of glutamine and ATP through an activated phospho-Asp-tRNA(Asn) or phospho-Glu-tRNA(Gln). This is Aspartyl/glutamyl-tRNA(Asn/Gln) amidotransferase subunit C from Clostridium botulinum (strain ATCC 19397 / Type A).